The sequence spans 346 residues: MFEQLDQIEKEAAAALASVQSLDDLAAWRTQWTGKKGALAQASQSIGKLDPKDRPAFGQRFGAIKQALSEQETTLEARLQSAALHQELEEDAVDISLPGRAANIGRLHPSTQSLRRIQHIFAEMGFQVWESREVESDEYNFELLNMPAHHPARDMWDTFYVQSDDPHQKVVLRTHTSPGQIHVMRTLNPEPIRVILPGKCYRYEPVSARSEMMFHQVEGLVIGKNITMADLKGTLANFARRMFKDDVKVRYRPSYFPFTEPSVEVDIECFICGGEGCRICKKSGWLEILGAGMVHPTVLRNGGYDPAEWSGFAFGMGPERQTMLRYDIDDIRWFFSNDGRFLEQFG.

Glu260 contacts Mg(2+).

It belongs to the class-II aminoacyl-tRNA synthetase family. Phe-tRNA synthetase alpha subunit type 1 subfamily. In terms of assembly, tetramer of two alpha and two beta subunits. Mg(2+) is required as a cofactor.

The protein resides in the cytoplasm. It catalyses the reaction tRNA(Phe) + L-phenylalanine + ATP = L-phenylalanyl-tRNA(Phe) + AMP + diphosphate + H(+). This Herpetosiphon aurantiacus (strain ATCC 23779 / DSM 785 / 114-95) protein is Phenylalanine--tRNA ligase alpha subunit.